A 358-amino-acid polypeptide reads, in one-letter code: Peptide chain release factor 1 (358 aa).

Residue Q234 is modified to N5-methylglutamine. The interval 283-306 (ERLHSERAGQRKSMVGSGDRSERI) is disordered.

It belongs to the prokaryotic/mitochondrial release factor family. Methylated by PrmC. Methylation increases the termination efficiency of RF1.

It localises to the cytoplasm. Its function is as follows. Peptide chain release factor 1 directs the termination of translation in response to the peptide chain termination codons UAG and UAA. This chain is Peptide chain release factor 1, found in Zymomonas mobilis subsp. mobilis (strain ATCC 31821 / ZM4 / CP4).